We begin with the raw amino-acid sequence, 387 residues long: Fructose-1,6-bisphosphate aldolase/phosphatase (387 aa).

Asp-13 serves as the catalytic Proton acceptor; for FBP phosphatase activity. Mg(2+) is bound by residues Asp-13, His-20, Asp-54, and Asp-55. His-20 provides a ligand contact to beta-D-fructose 1,6-bisphosphate. Position 20 (His-20) interacts with dihydroxyacetone phosphate. A beta-D-fructose 1,6-bisphosphate-binding site is contributed by Tyr-92. Gln-96 contributes to the Mg(2+) binding site. 105–106 serves as a coordination point for beta-D-fructose 1,6-bisphosphate; it reads GN. Asp-133 is a Mg(2+) binding site. Beta-D-fructose 1,6-bisphosphate is bound at residue Lys-134. A dihydroxyacetone phosphate-binding site is contributed by Lys-134. The active-site Proton donor/acceptor; for FBP aldolase activity is Tyr-229. Lys-232, Asp-233, and Asp-234 together coordinate Mg(2+). Catalysis depends on Lys-232, which acts as the Schiff-base intermediate with DHAP; for FBP aldolase activity. Beta-D-fructose 1,6-bisphosphate contacts are provided by residues 242–243, Arg-266, Asp-287, and Tyr-348; that span reads QS. Dihydroxyacetone phosphate is bound by residues Arg-266 and Asp-287.

Belongs to the FBP aldolase/phosphatase family. As to quaternary structure, homooctamer; dimer of tetramers. Requires Mg(2+) as cofactor.

It carries out the reaction beta-D-fructose 1,6-bisphosphate + H2O = beta-D-fructose 6-phosphate + phosphate. The enzyme catalyses beta-D-fructose 1,6-bisphosphate = D-glyceraldehyde 3-phosphate + dihydroxyacetone phosphate. The protein operates within carbohydrate biosynthesis; gluconeogenesis. In terms of biological role, catalyzes two subsequent steps in gluconeogenesis: the aldol condensation of dihydroxyacetone phosphate (DHAP) and glyceraldehyde-3-phosphate (GA3P) to fructose-1,6-bisphosphate (FBP), and the dephosphorylation of FBP to fructose-6-phosphate (F6P). The sequence is that of Fructose-1,6-bisphosphate aldolase/phosphatase from Ignicoccus hospitalis (strain KIN4/I / DSM 18386 / JCM 14125).